A 291-amino-acid chain; its full sequence is MPKLLGSFISFKAPNYFVQSAQDAIAIDATALMVFLGPPHSAYRVPFNKMQFSLGYELLKTKNINSNGLVVHAPYIINCASKDPLKQQNAISVLTNEIQLCNLAGAHYLVLHPGSAVAQTTNEALDNLVKVLNQVINKTKTTVICLETMAGKGNEIGRDLTELKYVIDRIVDKDRIGVCLDTCHFHDSGIDFSDLTGVFNTITTKLGFEFLKVIHLNESKNNCGSKKDRHANINAGMIGFENLMKFISHPQIKDLPIILETPSTSLNYPTIYREEISQIRSWFKTYQPDAN.

H72, H112, E147, D181, H184, H215, D228, H230, and E260 together coordinate Zn(2+).

Belongs to the AP endonuclease 2 family. Zn(2+) serves as cofactor.

It catalyses the reaction Endonucleolytic cleavage to 5'-phosphooligonucleotide end-products.. In terms of biological role, endonuclease IV plays a role in DNA repair. It cleaves phosphodiester bonds at apurinic or apyrimidinic (AP) sites, generating a 3'-hydroxyl group and a 5'-terminal sugar phosphate. The chain is Probable endonuclease 4 from Mycoplasma genitalium (strain ATCC 33530 / DSM 19775 / NCTC 10195 / G37) (Mycoplasmoides genitalium).